Here is a 180-residue protein sequence, read N- to C-terminus: MAETATIARPYAEALFRVASESSAGNLGAWSELVSEMGQVAANPDMKAVAGDPNVPGDKLAELFLSVLKSPLNDEARRFVKLLVDNGRLTVMPEIAEQFHVLKNAREGSSDVEITSAFPLEGSQLNDLVAALERKFGRKLYAQVAVDPSLIGGVSVKVGDEVLDTSVRSRLAAMQATLTA.

Belongs to the ATPase delta chain family. F-type ATPases have 2 components, F(1) - the catalytic core - and F(0) - the membrane proton channel. F(1) has five subunits: alpha(3), beta(3), gamma(1), delta(1), epsilon(1). F(0) has three main subunits: a(1), b(2) and c(10-14). The alpha and beta chains form an alternating ring which encloses part of the gamma chain. F(1) is attached to F(0) by a central stalk formed by the gamma and epsilon chains, while a peripheral stalk is formed by the delta and b chains.

Its subcellular location is the cell inner membrane. F(1)F(0) ATP synthase produces ATP from ADP in the presence of a proton or sodium gradient. F-type ATPases consist of two structural domains, F(1) containing the extramembraneous catalytic core and F(0) containing the membrane proton channel, linked together by a central stalk and a peripheral stalk. During catalysis, ATP synthesis in the catalytic domain of F(1) is coupled via a rotary mechanism of the central stalk subunits to proton translocation. In terms of biological role, this protein is part of the stalk that links CF(0) to CF(1). It either transmits conformational changes from CF(0) to CF(1) or is implicated in proton conduction. In Cupriavidus necator (strain ATCC 17699 / DSM 428 / KCTC 22496 / NCIMB 10442 / H16 / Stanier 337) (Ralstonia eutropha), this protein is ATP synthase subunit delta.